We begin with the raw amino-acid sequence, 84 residues long: Large ribosomal subunit protein bL31B (84 aa).

It belongs to the bacterial ribosomal protein bL31 family. Type B subfamily. Part of the 50S ribosomal subunit.

This is Large ribosomal subunit protein bL31B from Rhodococcus erythropolis (strain PR4 / NBRC 100887).